The primary structure comprises 642 residues: Bud site selection protein 5 (642 aa).

The region spanning 224–339 is the N-terminal Ras-GEF domain; it reads EVFRIQLYLN…DIVQLFINKK (116 aa). The region spanning 412–640 is the Ras-GEF domain; that stretch reads SPWSLAKTLT…YQVSIAKVPR (229 aa).

Interacts with AXL2, BEM1, GSP1 and in haploid cells with AXL1.

It is found in the bud neck. The protein resides in the cytoplasm. It localises to the cell cortex. Functionally, GDP-GTP exchange factor (GEF) for the small GTPase BUD1/RSR1. Regulates the activity of BUD1 together with BUD2 which is a GTPase-activating protein (GAP) of BUD1. Required to produce both the axial and bipolar patterns of bud site selection. Determines the orientation of division axis. Overexpression can suppress mutations in PRP20 which is the GEF for GSP1. May be a cytoplasmic GEF for GSP1. Might also act on the Ras-like protein CDC42. Appears to bind to Ras proteins but not to activate them. This is Bud site selection protein 5 (BUD5) from Saccharomyces cerevisiae (strain ATCC 204508 / S288c) (Baker's yeast).